A 632-amino-acid chain; its full sequence is MAEETQHNKLAAAKKKLKEYWQKNSPRVPAGANRNRKTNGSIPEKATSGGCQPPRDSATGFHREGPTSSATLKDLESPCQERAVVLDSRSVEISQLKNTIKSLKQQKKQVEHQLEEEKKANNKKQKAKRVLEVQIQTLNIQKEELNTDLYHMKRSLRYFEEKSKDLAVRLQHSLQRKGELESVLSNVMATQKKKANQLSSRSKARTEWKLEQSMREEALLKVQLTQFKESFQQVQLERDEYSEHLKGERARWQQRMRKMSQEICTLKKEKQQDMRRVEKLERSLSKLKNQMAEPLPPEPPAVPSEVELQHLRKELERVAGELQAQVKNNQRISLLNQRQEERIREQEERLRKQEERIQEQHKSLQQLAKPQSVFKEPNNENKNALQLEQQVKELQEKLGEEHLEAASQQNQQLTAQLSLMALPGEGHGGEHLDSEGEEAPRPMPSVPEDPESREAMSSFMDHLEEKADLSELVKKKELCFIHHWRERCHQKTHHLLSEPGGRAKDAALGGGHHQAGAQGGDEGEAAGAAADGIAAYSNYNNGHRKFLAAAHNSADEPGPGAPAPQELGAADKHGHLCEVSLTSSAQGEAREDPLLDKPTAQPIVQDHQEHPGLGSNCCVPFLCWAWLPRRRR.

A disordered region spans residues 1-76 (MAEETQHNKL…TSSATLKDLE (76 aa)). Coiled-coil stretches lie at residues 86-154 (LDSR…HMKR) and 220-421 (LKVQ…SLMA). 2 stretches are compositionally biased toward basic and acidic residues: residues 352–362 (KQEERIQEQHK) and 427–440 (HGGE…EEAP). Disordered regions lie at residues 352-377 (KQEE…FKEP), 423-452 (PGEG…DPES), and 496-524 (LSEP…DEGE). Over residues 508 to 520 (LGGGHHQAGAQGG) the composition is skewed to gly residues.

Belongs to the GOLGA8 family.

The sequence is that of Golgin subfamily A member 8J (GOLGA8J) from Homo sapiens (Human).